Here is a 109-residue protein sequence, read N- to C-terminus: Large ribosomal subunit protein uL23 (109 aa).

It belongs to the universal ribosomal protein uL23 family. As to quaternary structure, part of the 50S ribosomal subunit. Contacts protein L29, and trigger factor when it is bound to the ribosome.

Its function is as follows. One of the early assembly proteins it binds 23S rRNA. One of the proteins that surrounds the polypeptide exit tunnel on the outside of the ribosome. Forms the main docking site for trigger factor binding to the ribosome. The chain is Large ribosomal subunit protein uL23 from Aquifex pyrophilus.